The following is a 1972-amino-acid chain: TP53-binding protein 1 (1972 aa).

Disordered stretches follow at residues 24-273 (DSQP…VAAM), 290-332 (QIQK…CSLA), and 346-507 (GQRS…LGLS). Phosphoserine occurs at positions 25 and 63. The segment covering 82-91 (EHLKENKVAD) has biased composition (basic and acidic residues). A compositionally biased stretch (polar residues) spans 94–121 (DSSNLDTCGSISQVIEQLPQPNRTSSVL). A phosphoserine mark is found at S105 and S124. The segment covering 138-149 (ELEQKEKEKEED) has biased composition (basic and acidic residues). Positions 151 to 168 (SGNTTHSLGAEDTASSQL) are enriched in polar residues. A phosphoserine mark is found at S166, S176, and S178. A compositionally biased stretch (polar residues) spans 195-205 (LQSVTTNSGYT). K217 participates in a covalent cross-link: Glycyl lysine isopeptide (Lys-Gly) (interchain with G-Cter in SUMO1); alternate. K217 is covalently cross-linked (Glycyl lysine isopeptide (Lys-Gly) (interchain with G-Cter in SUMO2); alternate). Phosphoserine occurs at positions 222, 265, and 294. 2 stretches are compositionally biased toward polar residues: residues 300-322 (LSTQ…CSTP) and 346-361 (GQRS…NSSD). At T302 the chain carries Phosphothreonine. Phosphoserine is present on residues S366, S380, S395, S398, S429, S452, and S464. The segment covering 426–441 (STVSPQASTPISQSTP) has biased composition (polar residues). The segment covering 442 to 452 (VFPPGSLPIPS) has biased composition (pro residues). The segment covering 481–490 (HSSSLTVECS) has biased composition (polar residues). Positions 491–501 (KTSEIEPKNSP) are enriched in basic and acidic residues. Phosphoserine occurs at positions 500, 507, 518, 523, and 525. The span at 520 to 531 (SEYSQSPKMESL) shows a compositional bias: polar residues. The tract at residues 520–556 (SEYSQSPKMESLSSHRIDEDGENTQIEDTEPMSPVLN) is disordered. Over residues 538-549 (EDGENTQIEDTE) the composition is skewed to acidic residues. T543 and T548 each carry phosphothreonine. Residues S552, S566, and S580 each carry the phosphoserine modification. The tract at residues 568-595 (LMNPAQDGEVQLSQNDDKTKGDDTDTRD) is disordered. Residues 582-595 (NDDKTKGDDTDTRD) show a composition bias toward basic and acidic residues. 4 positions are modified to phosphoserine: S630, S635, S639, and S640. Positions 649–687 (EIKEHHPEEGSSGSEVEEIPETPCESQGEELKEENMESV) are disordered. T670 carries the post-translational modification Phosphothreonine. A phosphoserine mark is found at S692, S724, S727, S771, S809, S830, S831, and S834. Residues 742-911 (EQEAWEEATS…TPFHFTLPKE (170 aa)) are disordered. Over residues 798–816 (AENRLDTKEEKSVEYEGDL) the composition is skewed to basic and acidic residues. A compositionally biased stretch (basic and acidic residues) spans 839–848 (RADDPLRLDQ). The segment covering 849–864 (ELQQPQTQEKTSNSLT) has biased composition (polar residues). A Phosphothreonine modification is found at T855. K868 is covalently cross-linked (Glycyl lysine isopeptide (Lys-Gly) (interchain with G-Cter in SUMO1); alternate). A Glycyl lysine isopeptide (Lys-Gly) (interchain with G-Cter in SUMO2); alternate cross-link involves residue K868. Polar residues predominate over residues 890 to 902 (HASQSFCESSSET). T922 carries the post-translational modification Phosphothreonine. K930 is covalently cross-linked (Glycyl lysine isopeptide (Lys-Gly) (interchain with G-Cter in SUMO2)). Phosphoserine occurs at positions 970 and 975. Residue K984 forms a Glycyl lysine isopeptide (Lys-Gly) (interchain with G-Cter in SUMO2) linkage. Disordered regions lie at residues 997–1028 (EASE…SVAS) and 1045–1103 (ENEA…VSPA). Residues 1018–1028 (GSTAVAESVAS) are compositionally biased toward polar residues. S1028 bears the Phosphoserine mark. T1056 is subject to Phosphothreonine. S1068 carries the post-translational modification Phosphoserine. Residues 1071-1083 (EEEKEKLEGDHTI) are compositionally biased toward basic and acidic residues. S1086, S1094, S1101, and S1114 each carry phosphoserine. Over residues 1127–1139 (DQKEGRSTNKENP) the composition is skewed to basic and acidic residues. 3 disordered regions span residues 1127–1148 (DQKE…ERPS), 1188–1232 (NFGK…QPPH), and 1269–1478 (VTEE…DGLD). S1148 carries the post-translational modification Phosphoserine. Polar residues predominate over residues 1188–1200 (NFGKQDATVQTER). T1214 is subject to Phosphothreonine. 2 positions are modified to phosphoserine: S1216 and S1219. Positions 1272-1285 (ETEEPIVECQECET) are enriched in acidic residues. 2 stretches are compositionally biased toward low complexity: residues 1298–1307 (DLGDISSFSS) and 1316–1329 (SSGT…SSGS). Phosphoserine occurs at positions 1317 and 1342. An Omega-N-methylarginine modification is found at R1355. S1362 is subject to Phosphoserine. K1365 is covalently cross-linked (Glycyl lysine isopeptide (Lys-Gly) (interchain with G-Cter in SUMO2)). S1368 carries the phosphoserine modification. T1372 carries the post-translational modification Phosphothreonine. The GAR signature appears at 1396 to 1403 (RGRGRRGR). 2 positions are modified to phosphoserine: S1426 and S1430. K1434 participates in a covalent cross-link: Glycyl lysine isopeptide (Lys-Gly) (interchain with G-Cter in SUMO1); alternate. K1434 is covalently cross-linked (Glycyl lysine isopeptide (Lys-Gly) (interchain with G-Cter in SUMO2); alternate). Residues S1460, S1462, and S1474 each carry the phosphoserine modification. Residues 1484 to 1603 (NSFVGLRVVA…NRLREQYGLG (120 aa)) form a tudor-like region. The interval 1495-1523 (WSSNGYFYSGKITRDVGAGKYKLLFDDGY) is interaction with dimethylated histone H4. K1563 is covalently cross-linked (Glycyl lysine isopeptide (Lys-Gly) (interchain with G-Cter in SUMO1); alternate). Residue K1563 forms a Glycyl lysine isopeptide (Lys-Gly) (interchain with G-Cter in SUMO2); alternate linkage. Positions 1604–1631 (PYEAVTPLTKAADISLDNLVEGKRKRRS) match the UDR motif. A Phosphothreonine modification is found at T1609. Phosphoserine occurs at positions 1618, 1631, and 1635. Disordered regions lie at residues 1622–1719 (LVEG…EEQR) and 1745–1768 (LASR…FLEI). The segment covering 1634 to 1650 (SSPATPTASSSSSTTPT) has biased composition (low complexity). T1638 and T1648 each carry phosphothreonine. Phosphoserine occurs at positions 1656, 1673, and 1678. K1685 is covalently cross-linked (Glycyl lysine isopeptide (Lys-Gly) (interchain with G-Cter in ubiquitin)). Phosphoserine is present on residues S1701, S1759, and S1778. 2 consecutive BRCT domains span residues 1724–1848 (LNKT…NYLL) and 1864–1964 (PREN…QHPK).

In terms of assembly, homoligomer. Interacts with p53/TP53 (via the central domain). Interacts with DCLRE1C. Interacts with histone H2AX and this requires phosphorylation of H2AX on 'Ser-139'. Interacts with histone H4 that has been dimethylated at 'Lys-20' (H4K20me2). Has low affinity for histone H4 containing monomethylated 'Lys-20' (H4K20me1). Does not bind histone H4 containing unmethylated or trimethylated 'Lys-20' (H4K20me3). Has low affinity for histone H3 that has been dimethylated on 'Lys-79'. Has very low affinity for histone H3 that has been monomethylated on 'Lys-79' (in vitro). Does not bind unmethylated histone H3. Interacts with histone H2A monoubiquitinated at 'Lys-15' (H2AK15Ub). Interacts with PWWP3A/EXPAND1. Interacts with CHEK2; modulates CHEK2 phosphorylation at 'Thr-68' in response to infrared. Interacts with MSL1; this interaction may be required for MSL1 DNA repair activity, but not for histone acetyltransferase activity. Interacts (when phosphorylated by ATM) with RIF1. Interacts (via the Tudor-like domain) with NUDT16L1/TIRR; interaction masks the Tudor-like domain and prevents recruitment to chromatin. Interacts with PAXIP1. Interacts with SHLD2. Interacts (when phosphorylated) with TOPBP1. Interacts with GFI1; promoting methylation by PRMT1. Interacts with (phosphorylated) DYNLL1; specifically binds DYNLL1 phosphorylated at 'Ser-88' and promotes its recruitment to double stand breaks (DSBs). (Microbial infection) Interacts (via C-terminus) with Epstein-Barr virus lytic switch protein BZLF1 (via C-terminus); this interaction is involved in the activation of the viral lytic cycle. Asymmetrically dimethylated on Arg residues by PRMT1. Methylation is required for DNA binding. In terms of processing, phosphorylated at basal level in the absence of DNA damage. Phosphorylated by ATM in response to DNA damage: phosphorylation at different sites promotes interaction with different set of proteins: phosphorylation at the N-terminus by ATM (residues from 6-178) promotes interaction with PAXIP1 and non-homologous end joining (NHEJ) of dysfunctional telomeres. Phosphorylation by ATM at residues that are located more C-terminus (residues 300-650) leads to promote interaction with RIF1. Interaction with RIF1 leads to disrupt interaction with NUDT16L1/TIRR. Phosphorylation at Thr-1609 and Ser-1618 in the UDR motif blocks interaction with H2AK15ub. Dephosphorylated by PPP4C. Hyperphosphorylation during mitosis correlates with its exclusion from chromatin and DNA lesions. Hyperphosphorylated in an ATR-dependent manner in response to DNA damage induced by UV irradiation. Dephosphorylated by PPP5C. Phosphorylation at Ser-366 and Thr-670 promotes interaction with TOPBP1. Phosphorylated by VRK1. Post-translationally, monoubiquitinated at Lys-1685 by MSL2 is reponse to DNA damage, leading to its stabilization.

It localises to the nucleus. It is found in the chromosome. The protein resides in the centromere. The protein localises to the kinetochore. Double-strand break (DSB) repair protein involved in response to DNA damage, telomere dynamics and class-switch recombination (CSR) during antibody genesis. Plays a key role in the repair of double-strand DNA breaks (DSBs) in response to DNA damage by promoting non-homologous end joining (NHEJ)-mediated repair of DSBs and specifically counteracting the function of the homologous recombination (HR) repair protein BRCA1. In response to DSBs, phosphorylation by ATM promotes interaction with RIF1 and dissociation from NUDT16L1/TIRR, leading to recruitment to DSBs sites. Recruited to DSBs sites by recognizing and binding histone H2A monoubiquitinated at 'Lys-15' (H2AK15Ub) and histone H4 dimethylated at 'Lys-20' (H4K20me2), two histone marks that are present at DSBs sites. Required for immunoglobulin class-switch recombination (CSR) during antibody genesis, a process that involves the generation of DNA DSBs. Participates in the repair and the orientation of the broken DNA ends during CSR. In contrast, it is not required for classic NHEJ and V(D)J recombination. Promotes NHEJ of dysfunctional telomeres via interaction with PAXIP1. This Homo sapiens (Human) protein is TP53-binding protein 1.